A 22-amino-acid polypeptide reads, in one-letter code: Conantokin-Oc (22 aa).

A disordered region spans residues 1 to 22 (GEEERKAMAELEAKKAQEALKA). 4-carboxyglutamate is present on residues E3, E4, E10, and E18.

In terms of tissue distribution, expressed by the venom duct.

It localises to the secreted. In terms of biological role, conantokins inhibit N-methyl-D-aspartate (NMDA) receptors. This is Conantokin-Oc from Conus ochroleucus (Perfect cone).